The chain runs to 91 residues: Dynein light chain 1, cytoplasmic (91 aa).

This sequence belongs to the dynein light chain family. Homodimer. Cytoplasmic dynein consists of two catalytic heavy chains (HCs) and a number of non-catalytic subunits which present intermediate chains (ICs), light intermediate chains (LICs) and light chains (LCs). Component of the nuclear pore complex (NPC). NPC constitutes the exclusive means of nucleocytoplasmic transport. NPCs allow the passive diffusion of ions and small molecules and the active, nuclear transport receptor-mediated bidirectional transport of macromolecules such as proteins, RNAs, ribonucleoparticles (RNPs), and ribosomal subunits across the nuclear envelope. Due to its 8-fold rotational symmetry, all subunits are present with 8 copies or multiples thereof.

The protein localises to the cytoplasm. It is found in the cytoskeleton. Its subcellular location is the nucleus. The protein resides in the nuclear pore complex. Acts as one of several non-catalytic accessory components of the cytoplasmic dynein complex that are thought to be involved in linking dynein to cargos and to adapter proteins that regulate dynein function. Cytoplasmic dynein 1 acts as a motor for the intracellular retrograde motility of vesicles and organelles along microtubules. May play a role in changing or maintaining the spatial distribution of cytoskeletal structures. Also a component of the nuclear pore complex. This chain is Dynein light chain 1, cytoplasmic (DYN2), found in Debaryomyces hansenii (strain ATCC 36239 / CBS 767 / BCRC 21394 / JCM 1990 / NBRC 0083 / IGC 2968) (Yeast).